Here is a 276-residue protein sequence, read N- to C-terminus: uncharacterized protein (276 aa).

In terms of domain architecture, AB hydrolase-1 spans 20–137 (PVLIFIPGAN…PPINTFLPDS (118 aa)). Residues 57–76 (GESELTEPLPDSASNPDSDY) form a disordered region.

The protein belongs to the AB hydrolase superfamily.

This is an uncharacterized protein from Staphylococcus aureus (strain MW2).